Consider the following 735-residue polypeptide: Phosphoribosylformylglycinamidine synthase subunit PurL (735 aa).

H49 is an active-site residue. Residues Y52 and K91 each coordinate ATP. E93 lines the Mg(2+) pocket. Substrate is bound by residues 94–97 (SHNH) and R116. The active-site Proton acceptor is the H95. D117 is a binding site for Mg(2+). Residue Q240 participates in substrate binding. Position 268 (D268) interacts with Mg(2+). 312 to 314 (ESQ) contributes to the substrate binding site. Residues D493 and G530 each contribute to the ATP site. A Mg(2+)-binding site is contributed by N531. S533 is a binding site for substrate.

The protein belongs to the FGAMS family. As to quaternary structure, monomer. Part of the FGAM synthase complex composed of 1 PurL, 1 PurQ and 2 PurS subunits.

It localises to the cytoplasm. The enzyme catalyses N(2)-formyl-N(1)-(5-phospho-beta-D-ribosyl)glycinamide + L-glutamine + ATP + H2O = 2-formamido-N(1)-(5-O-phospho-beta-D-ribosyl)acetamidine + L-glutamate + ADP + phosphate + H(+). Its pathway is purine metabolism; IMP biosynthesis via de novo pathway; 5-amino-1-(5-phospho-D-ribosyl)imidazole from N(2)-formyl-N(1)-(5-phospho-D-ribosyl)glycinamide: step 1/2. Its function is as follows. Part of the phosphoribosylformylglycinamidine synthase complex involved in the purines biosynthetic pathway. Catalyzes the ATP-dependent conversion of formylglycinamide ribonucleotide (FGAR) and glutamine to yield formylglycinamidine ribonucleotide (FGAM) and glutamate. The FGAM synthase complex is composed of three subunits. PurQ produces an ammonia molecule by converting glutamine to glutamate. PurL transfers the ammonia molecule to FGAR to form FGAM in an ATP-dependent manner. PurS interacts with PurQ and PurL and is thought to assist in the transfer of the ammonia molecule from PurQ to PurL. This Azorhizobium caulinodans (strain ATCC 43989 / DSM 5975 / JCM 20966 / LMG 6465 / NBRC 14845 / NCIMB 13405 / ORS 571) protein is Phosphoribosylformylglycinamidine synthase subunit PurL.